Consider the following 313-residue polypeptide: Formimidoylglutamase (313 aa).

Mn(2+) contacts are provided by His130, Asp155, His157, Asp159, Asp241, and Asp243.

It belongs to the arginase family. Mn(2+) serves as cofactor.

The catalysed reaction is N-formimidoyl-L-glutamate + H2O = formamide + L-glutamate. Its pathway is amino-acid degradation; L-histidine degradation into L-glutamate; L-glutamate from N-formimidoyl-L-glutamate (hydrolase route): step 1/1. Its function is as follows. Catalyzes the conversion of N-formimidoyl-L-glutamate to L-glutamate and formamide. In Salmonella paratyphi B (strain ATCC BAA-1250 / SPB7), this protein is Formimidoylglutamase.